The chain runs to 422 residues: Acyl-[acyl-carrier-protein] desaturase 6, chloroplastic (422 aa).

Residues 1–46 constitute a chloroplast transit peptide; that stretch reads MAATATMAMPLANRLRCKPNTNSSSPSRTLFGRRVTMISSSRWMCR. Fe cation contacts are provided by E154, E192, H195, E245, E280, and H283.

This sequence belongs to the fatty acid desaturase type 2 family. As to quaternary structure, homodimer. The cofactor is Fe(2+).

It is found in the plastid. The protein localises to the chloroplast. It functions in the pathway lipid metabolism; fatty acid metabolism. Its function is as follows. Introduces a cis double bond in the acyl chain of an acyl-[acyl-carrier protein]. This chain is Acyl-[acyl-carrier-protein] desaturase 6, chloroplastic, found in Oryza sativa subsp. indica (Rice).